The sequence spans 2346 residues: Highly reducing polyketide synthase claI (2346 aa).

Positions 10 to 412 constitute a Ketosynthase family 3 (KS3) domain; that stretch reads TPAIAVVGMA…GTNCHLIVED (403 aa). Catalysis depends on for beta-ketoacyl synthase activity residues Cys-183, His-295, and His-335. Positions 530 to 842 are malonyl-CoA:ACP transacylase (MAT) domain; sequence IFTGQGSQWP…EYFSALKRGE (313 aa). Ser-622 functions as the For malonyltransferase activity in the catalytic mechanism. The segment at 912–1048 is N-terminal hotdog fold; the sequence is HDLLGSKILG…GLIRTSEEDS (137 aa). The interval 912-1213 is dehydratase (DH) domain; the sequence is HDLLGSKILG…INGLRFSSVD (302 aa). The PKS/mFAS DH domain maps to 912–1218; the sequence is HDLLGSKILG…FSSVDLGSVQ (307 aa). The active-site Proton acceptor; for dehydratase activity is His-944. A C-terminal hotdog fold region spans residues 1060–1218; sequence IHATPAQVWY…FSSVDLGSVQ (159 aa). Asp-1124 serves as the catalytic Proton donor; for dehydratase activity. Residues 1633–1946 are enoyl reductase (ER) domain; it reads GSLEALQWTQ…SARHIGKILI (314 aa). The tract at residues 1972 to 2151 is ketoreductase (KR) domain; the sequence is TYLIVGGLRG…HSLDLGVVDA (180 aa). The Carrier domain maps to 2258–2336; the sequence is SQLVEKAVTL…ALAEKMVSKV (79 aa). Ser-2296 carries the post-translational modification O-(pantetheine 4'-phosphoryl)serine.

Requires pantetheine 4'-phosphate as cofactor.

Its pathway is secondary metabolite biosynthesis. In terms of biological role, highly reducing polyketide synthase; part of the cla gene cluster that produces clavatol and ortho-quinone methide. The clavatol biosynthesis cluster cla and the terrestric acid cluster tra are both involved in the production of peniphenones and penilactones. The non-reducing PKS claF is responsible for the formation of clavatol from successive condensations of 3 malonyl-CoA units, presumably with a simple acetyl-CoA starter unit, and 2 methylation steps. The esterase claE probably collaborates with claF by catalyzing the hydrolysis of ACP-bound acyl intermediates to free the ACP from stalled intermediates. The clavatol oxidase claD then converts clavatol to hydroxyclavatol. Spontaneous dehydration of hydroxyclavatol leads to the accumulation of the highly active ortho-quinone methide. On the other hand, the PKS-NRPS hybrid traA is involved in the formation of crustosic acid, with the help of traB and traD. The polyketide synthase module (PKS) of traA is responsible for the synthesis of the polyketide backbone via the condensation of an acetyl-CoA starter unit with 3 malonyl-CoA units. The downstream nonribosomal peptide synthetase (NRPS) module then amidates the carboxyl end of the polyketide with L-malic acid. Because traA lacks a designated enoylreductase (ER) domain, the required activity is provided the enoyl reductase traG. Crustosic acid undergoes decarboxylation and isomerization to the terrestric acid, catalyzed by the 2-oxoglutarate-dependent dioxygenase traH. Both acids are further converted to the 2 gamma-butyrolactones (R)-5-methyltetronic acid and (S)-5-carboxylmethyltetronic acid, with involvement of the cytochrome P450 monooxygenase claJ. Spontaneous addition of the methide to these gamma-butyrolactones leads to peniphenone D and penilactone D, which undergo again stereospecific attacking by methide to give penilactones A and B. The function of the highly reducing polyketide synthase claI has not been investigated yet. This is Highly reducing polyketide synthase claI from Penicillium crustosum (Blue mold fungus).